Consider the following 168-residue polypeptide: Peptide deformylase 1 (168 aa).

Fe cation contacts are provided by C92 and H134. E135 is a catalytic residue. H138 serves as a coordination point for Fe cation.

This sequence belongs to the polypeptide deformylase family. Fe(2+) is required as a cofactor.

The enzyme catalyses N-terminal N-formyl-L-methionyl-[peptide] + H2O = N-terminal L-methionyl-[peptide] + formate. In terms of biological role, removes the formyl group from the N-terminal Met of newly synthesized proteins. Requires at least a dipeptide for an efficient rate of reaction. N-terminal L-methionine is a prerequisite for activity but the enzyme has broad specificity at other positions. The protein is Peptide deformylase 1 of Pseudomonas syringae pv. tomato (strain ATCC BAA-871 / DC3000).